Reading from the N-terminus, the 192-residue chain is UPF0312 protein Ent638_1570 (192 aa).

The signal sequence occupies residues 1–22 (MKKRLLGIALGSLLFTTGSAVA).

This sequence belongs to the UPF0312 family. Type 1 subfamily.

Its subcellular location is the periplasm. The chain is UPF0312 protein Ent638_1570 from Enterobacter sp. (strain 638).